We begin with the raw amino-acid sequence, 981 residues long: NAD(+) hydrolase tir-1 (981 aa).

Disordered regions lie at residues 1–31 (MLPN…RSLK), 74–128 (QNEQ…PTQP), and 173–225 (LSTP…PVDQ). Polar residues-rich tracts occupy residues 12–23 (PSFQSLNNNNQR) and 74–85 (QNEQDGETTSTD). Positions 87 to 97 (AFFELDDDDDL) are enriched in acidic residues. Residues 98 to 114 (SSPSVPGSPVDPPSISV) show a composition bias toward low complexity. A compositionally biased stretch (pro residues) spans 115–128 (PLPPKSAPPCPTQP). Basic and acidic residues predominate over residues 182–200 (EEMHNGQVRKESEYRRFKS). SAM domains follow at residues 614-678 (WTCA…LKVA) and 684-750 (VDES…AKHP). The TIR domain maps to 760–857 (KQIDVFISYR…EHQKNIIPIF (98 aa)). 769 to 770 (RR) provides a ligand contact to NAD(+). Glu-842 is a catalytic residue. Polar residues-rich tracts occupy residues 908 to 939 (TTPT…TGPS), 954 to 963 (FTPTGSQERA), and 972 to 981 (PSASTTSDRN). The tract at residues 908–981 (TTPTTKEMPS…PSASTTSDRN (74 aa)) is disordered.

It belongs to the SARM1 family. In terms of assembly, homodimer. Interacts with rab-1, pal-1 and unc-43. As to expression, highly expressed in hypodermis. Localizes to postsynaptic regions of axons.

It is found in the cytoplasm. It catalyses the reaction NAD(+) + H2O = ADP-D-ribose + nicotinamide + H(+). NAD(+) hydrolase, which plays a key role in non-apoptotic cell death by regulating NAD(+) metabolism. In response to stress, homooligomerizes and catalyzes cleavage of NAD(+) into ADP-D-ribose (ADPR) and nicotinamide; NAD(+) cleavage promoting non-apoptotic neuronal cell death. In males, involved in non-apoptotic death of the linker cell which guides gonad elongation during larval development. Required for both innate immune response and specification of AWC(OFF) neuron. During late embryogenesis, it acts downstream of CAMKII (unc-43) to regulate specification of asymmetric odorant receptors in AWC(OFF) neuron via the nsy-1/ASK1 pmk-1/p38 MAP kinase signaling cascade. Required to localize nsy-1 to postsynaptic regions of AWC neuron, suggesting that it may act by assembling a signaling complex that regulate odorant receptor expression. Also plays a central role in resistance to infection to a broad range of bacterial and fungi pathogens, possibly by activating pmk-1, independently of the NF-kappa-B pathway. Required for expression of antimicrobial peptides nlp-29 and nlp-31. Its role in immune response and neuron specification may be mediated by the same nsy-1/ASK1 pmk-1/p38 MAP kinase cascade signaling pathway. Involved in the response to anoxic conditions probably by activating the p38 pathway composed of nsy-1/sek-1/pmk-1. Involved in regulation of the serotonergic response of ADF neurons to pathogenic food. In addition, plays a role in the up-regulation of gcs-1 upon arsenite treatment, most likely through activation of pmk-1, to confer protection against toxicity induced by heavy metals. In terms of biological role, regulates expression of antimicrobial peptide nlp-29 in response to fungal infection or physical injury. This Caenorhabditis elegans protein is NAD(+) hydrolase tir-1.